Consider the following 326-residue polypeptide: Glycerol-3-phosphate dehydrogenase [NAD(P)+] (326 aa).

NADPH is bound by residues Trp-15, Arg-35, and Lys-107. Positions 107, 135, and 137 each coordinate sn-glycerol 3-phosphate. Position 139 (Ala-139) interacts with NADPH. Positions 190, 243, 253, 254, and 255 each coordinate sn-glycerol 3-phosphate. Residue Lys-190 is the Proton acceptor of the active site. Position 254 (Arg-254) interacts with NADPH. Leu-273 and Glu-275 together coordinate NADPH.

This sequence belongs to the NAD-dependent glycerol-3-phosphate dehydrogenase family.

It is found in the cytoplasm. It carries out the reaction sn-glycerol 3-phosphate + NAD(+) = dihydroxyacetone phosphate + NADH + H(+). The enzyme catalyses sn-glycerol 3-phosphate + NADP(+) = dihydroxyacetone phosphate + NADPH + H(+). It participates in membrane lipid metabolism; glycerophospholipid metabolism. Functionally, catalyzes the reduction of the glycolytic intermediate dihydroxyacetone phosphate (DHAP) to sn-glycerol 3-phosphate (G3P), the key precursor for phospholipid synthesis. The sequence is that of Glycerol-3-phosphate dehydrogenase [NAD(P)+] from Bradyrhizobium sp. (strain BTAi1 / ATCC BAA-1182).